The primary structure comprises 84 residues: Cell division topological specificity factor (84 aa).

It belongs to the MinE family.

Its function is as follows. Prevents the cell division inhibition by proteins MinC and MinD at internal division sites while permitting inhibition at polar sites. This ensures cell division at the proper site by restricting the formation of a division septum at the midpoint of the long axis of the cell. In Paraburkholderia xenovorans (strain LB400), this protein is Cell division topological specificity factor.